The sequence spans 199 residues: Probable GTP-binding protein EngB (199 aa).

Residues 24–197 (EGYEVIFAGR…GARLNTFFGY (174 aa)) form the EngB-type G domain. Residues 32–39 (GRSNAGKS), 59–63 (GKTQH), 77–80 (DLPG), 144–147 (TKSD), and 176–178 (FSS) each bind GTP. Positions 39 and 61 each coordinate Mg(2+).

This sequence belongs to the TRAFAC class TrmE-Era-EngA-EngB-Septin-like GTPase superfamily. EngB GTPase family. It depends on Mg(2+) as a cofactor.

Its function is as follows. Necessary for normal cell division and for the maintenance of normal septation. In Ruthia magnifica subsp. Calyptogena magnifica, this protein is Probable GTP-binding protein EngB.